Reading from the N-terminus, the 144-residue chain is Deoxyuridine 5'-triphosphate nucleotidohydrolase (144 aa).

DUMP is bound by residues S66, R133, F138, and G139.

It belongs to the dUTPase family. In terms of assembly, homotrimer. It depends on Mg(2+) as a cofactor.

The enzyme catalyses dUTP + H2O = dUMP + diphosphate + H(+). The protein operates within pyrimidine metabolism; dUMP biosynthesis; dUMP from dCTP (dUTP route): step 2/2. Involved in nucleotide metabolism via production of dUMP, the immediate precursor of thymidine nucleotides, and decreases the intracellular concentration of dUTP so that uracil cannot be incorporated into DNA. The chain is Deoxyuridine 5'-triphosphate nucleotidohydrolase (DUT1) from Encephalitozoon cuniculi (strain GB-M1) (Microsporidian parasite).